Reading from the N-terminus, the 119-residue chain is Ribonuclease P protein component (119 aa).

This sequence belongs to the RnpA family. As to quaternary structure, consists of a catalytic RNA component (M1 or rnpB) and a protein subunit.

It catalyses the reaction Endonucleolytic cleavage of RNA, removing 5'-extranucleotides from tRNA precursor.. RNaseP catalyzes the removal of the 5'-leader sequence from pre-tRNA to produce the mature 5'-terminus. It can also cleave other RNA substrates such as 4.5S RNA. The protein component plays an auxiliary but essential role in vivo by binding to the 5'-leader sequence and broadening the substrate specificity of the ribozyme. The protein is Ribonuclease P protein component of Bacillus cereus (strain ATCC 14579 / DSM 31 / CCUG 7414 / JCM 2152 / NBRC 15305 / NCIMB 9373 / NCTC 2599 / NRRL B-3711).